The sequence spans 162 residues: Protein-export protein SecB (162 aa).

The protein belongs to the SecB family. In terms of assembly, homotetramer, a dimer of dimers. One homotetramer interacts with 1 SecA dimer.

Its subcellular location is the cytoplasm. In terms of biological role, one of the proteins required for the normal export of preproteins out of the cell cytoplasm. It is a molecular chaperone that binds to a subset of precursor proteins, maintaining them in a translocation-competent state. It also specifically binds to its receptor SecA. In Bradyrhizobium sp. (strain BTAi1 / ATCC BAA-1182), this protein is Protein-export protein SecB.